We begin with the raw amino-acid sequence, 441 residues long: Transforming protein p54/c-ets-1 (441 aa).

The PNT domain maps to 51–136; it reads ATFSGFAKEQ…EHLEILQKEE (86 aa). The segment at 130–243 is activation domain; required for transcription activation; the sequence is EILQKEEAKP…DNMCMGRASR (114 aa). Residues 304–312 are helix HI-1; sequence FKDYVRDRA. Residues 323–330 are helix HI-2; it reads AAALAGYT. The segment at residues 335–415 is a DNA-binding region (ETS); it reads IQLWQFLLEL…AGKRYVYRFV (81 aa). Positions 418–422 are helix H4; that stretch reads LQSLL. The tract at residues 426 to 432 is helix H5; sequence PEELHAM.

Belongs to the ETS family. As to quaternary structure, binds DNA as a homodimer; homodimerization is required for transcription activation.

It is found in the nucleus. Its subcellular location is the cytoplasm. Autoinhibited by a module composed of four alpha helices (HI-1, HI-2, H4, and H5) that flank the DNA-binding ETS domain, reducing the affinity for DNA. Its function is as follows. Transcription factor. Directly controls the expression of cytokine and chemokine genes in a wide variety of different cellular contexts. The protein is Transforming protein p54/c-ets-1 (ETS1) of Gallus gallus (Chicken).